We begin with the raw amino-acid sequence, 720 residues long: MGQPRFSRPVHPAAAAEEVDHPPSDAGMGVDVLESGDTTPPTKRKSKFSGFGKIFKPWKWRKKKSSDKFKETSEVLERKISMRKPREELVKRGVLLEDPEQALSSDCPGKEGSVLRKSIILISHFRDAETPGQSEDDGGRLLYLQFQNLLLREGKEAAWPWHQAECIPVEQQVPPLGIKLTRGLFPSAGKSQGRAAEHPGLGLTSCVLLSTSILSAPANVSAGAFLVSFLSLVCNCSEALRAPGGEAVTLLTDTXEVTNQAQPPCQTAPCPPHPIPTNRNSSSVIAELSQAINSGTGLSKPSPPLPPKRGLLPTNPPEAALPSKPPGDRTVTASRPTLLPMHVAPTYPPPSPSPPLPTHIPPEPPRMPLPNSTPALDAPRSLDLPKETPPPSKDFRSLEVSKRTAEQGFGEPPGLPRLPQIPLHIRIQQALASPLPVTPPADGSHRAHSLLFENDGFGEDNGTLGRTRSLPVTIEMLKVPDDEEEEEEDQEEEQNSGPRVYIGDVPSITVIPMLVPQVLPEEQEGEEGMSDSDSEGPILYKDDEEDEEEDESHNSTLANKVKRKDTLAIKLGNTTTVQEEKIVFPRKSKEEWNEIRQQIGTTLIRRLSQRPTAEELEQRNILQPKNEADRQAEKREIKRRLTRKLSQRPTVAELQARKILRFNEYVEVTDAQDYDRRADKPWTKLTPADKAAIRKELNEFKSCEMEVHEESKQFTRYHRP.

Residues 1–48 (MGQPRFSRPVHPAAAAEEVDHPPSDAGMGVDVLESGDTTPPTKRKSKF) are disordered. Residues 74–99 (EVLERKISMRKPREELVKRGVLLEDP) form an RPEL 1 repeat. Disordered regions lie at residues 294–417 (SGTG…GLPR), 454–568 (NDGF…DTLA), and 610–648 (RPTAEELEQRNILQPKNEADRQAEKREIKRRLTRKLSQR). The segment covering 346–368 (TYPPPSPSPPLPTHIPPEPPRMP) has biased composition (pro residues). Basic and acidic residues predominate over residues 393–405 (KDFRSLEVSKRTA). Acidic residues-rich tracts occupy residues 481 to 494 (DDEEEEEEDQEEEQ), 521 to 534 (EEQEGEEGMSDSDS), and 542 to 551 (DDEEDEEEDE). 2 RPEL repeats span residues 601–626 (TTLIRRLSQRPTAEELEQRNILQPKN) and 639–664 (RRLTRKLSQRPTVAELQARKILRFNE). Positions 626-636 (NEADRQAEKRE) are enriched in basic and acidic residues. Positions 637 to 646 (IKRRLTRKLS) are enriched in basic residues.

This sequence belongs to the phosphatase and actin regulator family. As to quaternary structure, binds PPP1CA and actin.

It is found in the cytoplasm. Its subcellular location is the cell projection. The protein localises to the lamellipodium. Its function is as follows. Regulator of protein phosphatase 1 (PP1) required for neural tube and optic fissure closure, and enteric neural crest cell (ENCCs) migration during development. Acts as an activator of PP1. During neural tube closure, localizes to the ventral neural tube and activates PP1, leading to down-regulate cell proliferation within cranial neural tissue and the neural retina. Also acts as a regulator of migration of enteric neural crest cells (ENCCs) by activating PP1, leading to repression of the integrin signaling through the RHO/ROCK pathway. The protein is Phosphatase and actin regulator 4 (PHACTR4) of Gallus gallus (Chicken).